The sequence spans 194 residues: Putative manganese efflux pump MntP (194 aa).

The next 6 helical transmembrane spans lie at 3 to 23 (PFSI…AAIG), 37 to 57 (LRAG…GWVL), 69 to 89 (DHWI…IAGL), 110 to 132 (LGLA…SLAF), 147 to 167 (CTFS…NLIG), and 172 to 192 (ILGG…HLGA).

Belongs to the MntP (TC 9.B.29) family.

Its subcellular location is the cell inner membrane. Functionally, probably functions as a manganese efflux pump. The protein is Putative manganese efflux pump MntP of Xanthomonas oryzae pv. oryzae (strain MAFF 311018).